Here is a 180-residue protein sequence, read N- to C-terminus: Large ribosomal subunit protein uL5 (180 aa).

Belongs to the universal ribosomal protein uL5 family. As to quaternary structure, part of the 50S ribosomal subunit; part of the 5S rRNA/L5/L18/L25 subcomplex. Contacts the 5S rRNA and the P site tRNA. Forms a bridge to the 30S subunit in the 70S ribosome.

In terms of biological role, this is one of the proteins that bind and probably mediate the attachment of the 5S RNA into the large ribosomal subunit, where it forms part of the central protuberance. In the 70S ribosome it contacts protein S13 of the 30S subunit (bridge B1b), connecting the 2 subunits; this bridge is implicated in subunit movement. Contacts the P site tRNA; the 5S rRNA and some of its associated proteins might help stabilize positioning of ribosome-bound tRNAs. This is Large ribosomal subunit protein uL5 from Mycoplasma pneumoniae (strain ATCC 29342 / M129 / Subtype 1) (Mycoplasmoides pneumoniae).